The chain runs to 302 residues: Nucleotide-binding protein Rsph17029_0317 (302 aa).

15–22 (GPSGAGRT) is an ATP binding site. 62-65 (DVRN) contacts GTP.

This sequence belongs to the RapZ-like family.

Its function is as follows. Displays ATPase and GTPase activities. This chain is Nucleotide-binding protein Rsph17029_0317, found in Cereibacter sphaeroides (strain ATCC 17029 / ATH 2.4.9) (Rhodobacter sphaeroides).